We begin with the raw amino-acid sequence, 142 residues long: Large ribosomal subunit protein uL13 (142 aa).

This sequence belongs to the universal ribosomal protein uL13 family. As to quaternary structure, part of the 50S ribosomal subunit.

In terms of biological role, this protein is one of the early assembly proteins of the 50S ribosomal subunit, although it is not seen to bind rRNA by itself. It is important during the early stages of 50S assembly. This chain is Large ribosomal subunit protein uL13, found in Coxiella burnetii (strain CbuK_Q154) (Coxiella burnetii (strain Q154)).